The chain runs to 439 residues: Histidine--tRNA ligase (439 aa).

The protein belongs to the class-II aminoacyl-tRNA synthetase family. Homodimer.

Its subcellular location is the cytoplasm. It catalyses the reaction tRNA(His) + L-histidine + ATP = L-histidyl-tRNA(His) + AMP + diphosphate + H(+). This is Histidine--tRNA ligase from Leptospira borgpetersenii serovar Hardjo-bovis (strain L550).